The primary structure comprises 341 residues: DNA repair protein XRCC3 (341 aa).

Met-1 carries the N-acetylmethionine modification. 107–114 contributes to the ATP binding site; sequence GRSSAGKT.

It belongs to the RecA family. RAD51 subfamily. Interacts with RAD51C and RAD51. Part of the CX3 complex consisting of RAD51C and XRCC3; the complex has a ring-like structure arranged into a flat disc around a central channel; CX3 can interact with RAD51 in vitro. Forms a complex with FANCD2, BRCA2 and phosphorylated FANCG. Interacts with SWSAP1 and ZSWIM7; involved in homologous recombination repair. Interacts directly with PALB2 which may serve as a scaffold for a HR complex containing PALB2, BRCA2, RAD51C, RAD51 and XRCC3.

It localises to the nucleus. The protein resides in the cytoplasm. The protein localises to the perinuclear region. It is found in the mitochondrion matrix. Functionally, involved in the homologous recombination repair (HRR) pathway of double-stranded DNA, thought to repair chromosomal fragmentation, translocations and deletions. Part of the RAD21 paralog protein complex CX3 which acts in the BRCA1-BRCA2-dependent HR pathway. Upon DNA damage, CX3 acts downstream of RAD51 recruitment; the complex binds predominantly to the intersection of the four duplex arms of the Holliday junction (HJ) and to junctions of replication forks. Involved in HJ resolution and thus in processing HR intermediates late in the DNA repair process; the function may be linked to the CX3 complex and seems to involve GEN1 during mitotic cell cycle progression. Part of a PALB2-scaffolded HR complex containing BRCA2 and RAD51C and which is thought to play a role in DNA repair by HR. Plays a role in regulating mitochondrial DNA copy number under conditions of oxidative stress in the presence of RAD51 and RAD51C. This Bos taurus (Bovine) protein is DNA repair protein XRCC3 (XRCC3).